We begin with the raw amino-acid sequence, 393 residues long: Putative N(4)-(beta-N-acetylglucosaminyl)-L-asparaginase CG1827 (393 aa).

Positions 1 to 23 (MRRHLRASLWILCLATMAFSILA) are cleaved as a signal peptide. Residues Asn49 and Asn64 are each glycosylated (N-linked (GlcNAc...) asparagine). 2 cysteine pairs are disulfide-bonded: Cys97–Cys102 and Cys196–Cys212. The active-site Nucleophile is the Thr243. Residues 271–274 (RVGD) and 294–297 (TGDG) contribute to the substrate site. A disulfide bond links Cys354 and Cys381.

The protein belongs to the Ntn-hydrolase family. As to quaternary structure, heterotetramer of two alpha and two beta chains arranged as a dimer of alpha/beta heterodimers. Post-translationally, cleaved into an alpha and beta chain by autocatalysis; this activates the enzyme. The N-terminal residue of the beta subunit is responsible for the nucleophile hydrolase activity.

The catalysed reaction is N(4)-(beta-N-acetyl-D-glucosaminyl)-L-asparagine + H2O = N-acetyl-beta-D-glucosaminylamine + L-aspartate + H(+). In terms of biological role, cleaves the GlcNAc-Asn bond which joins oligosaccharides to the peptide of asparagine-linked glycoproteins. This chain is Putative N(4)-(beta-N-acetylglucosaminyl)-L-asparaginase CG1827, found in Drosophila melanogaster (Fruit fly).